Here is a 259-residue protein sequence, read N- to C-terminus: tRNA (guanine-N(7)-)-methyltransferase (259 aa).

Residues 1-11 (MSNTDNSDKNT) are compositionally biased toward basic and acidic residues. A disordered region spans residues 1-29 (MSNTDNSDKNTKPTGYRPPQTDFNTEFGN). S-adenosyl-L-methionine is bound by residues E89, E114, D141, and D164. D164 is an active-site residue. Substrate is bound by residues K168, D200, and 238–241 (TKFE).

The protein belongs to the class I-like SAM-binding methyltransferase superfamily. TrmB family.

It carries out the reaction guanosine(46) in tRNA + S-adenosyl-L-methionine = N(7)-methylguanosine(46) in tRNA + S-adenosyl-L-homocysteine. Its pathway is tRNA modification; N(7)-methylguanine-tRNA biosynthesis. Catalyzes the formation of N(7)-methylguanine at position 46 (m7G46) in tRNA. The polypeptide is tRNA (guanine-N(7)-)-methyltransferase (Corynebacterium diphtheriae (strain ATCC 700971 / NCTC 13129 / Biotype gravis)).